We begin with the raw amino-acid sequence, 517 residues long: GMP synthase [glutamine-hydrolyzing] (517 aa).

Positions 11–202 (KIIVLDYGSQ…AFDICKAEAN (192 aa)) constitute a Glutamine amidotransferase type-1 domain. Cys-88 (nucleophile) is an active-site residue. Active-site residues include His-176 and Glu-178. Positions 203–392 (WSMDDFITKQ…LGMPHALVWR (190 aa)) constitute a GMPS ATP-PPase domain. Position 230–236 (230–236 (SGGVDSS)) interacts with ATP.

Homodimer.

It catalyses the reaction XMP + L-glutamine + ATP + H2O = GMP + L-glutamate + AMP + diphosphate + 2 H(+). It participates in purine metabolism; GMP biosynthesis; GMP from XMP (L-Gln route): step 1/1. Its function is as follows. Catalyzes the synthesis of GMP from XMP. The sequence is that of GMP synthase [glutamine-hydrolyzing] from Lacticaseibacillus casei (strain BL23) (Lactobacillus casei).